Reading from the N-terminus, the 275-residue chain is 2,3,4,5-tetrahydropyridine-2,6-dicarboxylate N-succinyltransferase (275 aa).

Belongs to the transferase hexapeptide repeat family.

The protein localises to the cytoplasm. It catalyses the reaction (S)-2,3,4,5-tetrahydrodipicolinate + succinyl-CoA + H2O = (S)-2-succinylamino-6-oxoheptanedioate + CoA. It functions in the pathway amino-acid biosynthesis; L-lysine biosynthesis via DAP pathway; LL-2,6-diaminopimelate from (S)-tetrahydrodipicolinate (succinylase route): step 1/3. This chain is 2,3,4,5-tetrahydropyridine-2,6-dicarboxylate N-succinyltransferase, found in Ralstonia pickettii (strain 12J).